The primary structure comprises 128 residues: Fruiting body differentiation protein 16 (128 aa).

Residues 1–19 (MLFSHIVFVALSVFGLVQA) form the signal peptide.

Functionally, plays a role in the regulation of fruiting body development. The protein is Fruiting body differentiation protein 16 of Flammulina velutipes (Agaricus velutipes).